Here is a 226-residue protein sequence, read N- to C-terminus: 1-hydroxy-2-glutathionyl-2-methyl-3-butene dehydrogenase (226 aa).

It belongs to the short-chain dehydrogenases/reductases (SDR) family.

The catalysed reaction is 2-glutathionyl-2-methylbut-3-en-1-ol + 2 NAD(+) + H2O = 2-glutathionyl-2-methylbut-3-enoate + 2 NADH + 3 H(+). It carries out the reaction 2-glutathionyl-2-methylbut-3-en-1-ol + NAD(+) = 2-glutathionyl-2-methylbut-3-enal + NADH + H(+). It catalyses the reaction 2-glutathionyl-2-methylbut-3-enal + NAD(+) + H2O = 2-glutathionyl-2-methylbut-3-enoate + NADH + 2 H(+). In terms of biological role, involved in isoprene degradation. Catalyzes the two-step NAD(+)-dependent oxidation of 2-glutathionyl-2-methylbut-3-en-1-ol (HGMB) to 2-glutathionyl-2-methylbut-3-enoate (GMBA). The protein is 1-hydroxy-2-glutathionyl-2-methyl-3-butene dehydrogenase of Rhodococcus sp. (strain AD45).